Here is a 338-residue protein sequence, read N- to C-terminus: Holliday junction branch migration complex subunit RuvB (338 aa).

The tract at residues 1-181 (MEERILTQNF…FGVINRLDYY (181 aa)) is large ATPase domain (RuvB-L). ATP is bound by residues leucine 20, arginine 21, glycine 62, lysine 65, threonine 66, threonine 67, 128–130 (EDF), arginine 171, tyrosine 181, and arginine 218. Threonine 66 is a Mg(2+) binding site. Residues 182 to 252 (SVEELKEIIK…TSKEALDVLG (71 aa)) are small ATPAse domain (RuvB-S). Positions 255 to 338 (EIGLEYIDRK…YIEQGRIEGV (84 aa)) are head domain (RuvB-H). Arginine 310 and arginine 315 together coordinate DNA.

It belongs to the RuvB family. Homohexamer. Forms an RuvA(8)-RuvB(12)-Holliday junction (HJ) complex. HJ DNA is sandwiched between 2 RuvA tetramers; dsDNA enters through RuvA and exits via RuvB. An RuvB hexamer assembles on each DNA strand where it exits the tetramer. Each RuvB hexamer is contacted by two RuvA subunits (via domain III) on 2 adjacent RuvB subunits; this complex drives branch migration. In the full resolvosome a probable DNA-RuvA(4)-RuvB(12)-RuvC(2) complex forms which resolves the HJ.

Its subcellular location is the cytoplasm. It carries out the reaction ATP + H2O = ADP + phosphate + H(+). Functionally, the RuvA-RuvB-RuvC complex processes Holliday junction (HJ) DNA during genetic recombination and DNA repair, while the RuvA-RuvB complex plays an important role in the rescue of blocked DNA replication forks via replication fork reversal (RFR). RuvA specifically binds to HJ cruciform DNA, conferring on it an open structure. The RuvB hexamer acts as an ATP-dependent pump, pulling dsDNA into and through the RuvAB complex. RuvB forms 2 homohexamers on either side of HJ DNA bound by 1 or 2 RuvA tetramers; 4 subunits per hexamer contact DNA at a time. Coordinated motions by a converter formed by DNA-disengaged RuvB subunits stimulates ATP hydrolysis and nucleotide exchange. Immobilization of the converter enables RuvB to convert the ATP-contained energy into a lever motion, pulling 2 nucleotides of DNA out of the RuvA tetramer per ATP hydrolyzed, thus driving DNA branch migration. The RuvB motors rotate together with the DNA substrate, which together with the progressing nucleotide cycle form the mechanistic basis for DNA recombination by continuous HJ branch migration. Branch migration allows RuvC to scan DNA until it finds its consensus sequence, where it cleaves and resolves cruciform DNA. The protein is Holliday junction branch migration complex subunit RuvB of Thermoanaerobacter pseudethanolicus (strain ATCC 33223 / 39E) (Clostridium thermohydrosulfuricum).